Reading from the N-terminus, the 624-residue chain is MKQTSLALAITALLSTLPSALVQANEGCAPLTGKESGMDIGRSSTERCLPGANPLQDQQWYLLNSGQDGFSARGGIAGNDLNLWWAHRTGVLGQGVNVAVVDDGLAIAHPDLADNVRPGSKNVVTGSDDPTPTDPDTAHGTSVSGIIAAVDNAIGTKGIAPRAQLQGFNLLDDNSQQLQKDWLYALGDSNASRDNRVFNQSYGMSVVDPRSANSLDQSQLDRLFEQQTLKAQGAAYIKAAGNGFNKIAAGGYVLNRTGNGPKLPFENSNLDPSNSNFWNLVVSALNADGVRSSYSSVGSNIFLSATGGEYGTDTPAMVTTDLPGCDMGYNRTDDPSTNRLHGNSQLDASCDYNGVMNGTSSATPSTSGAMALLMSAYPDLSVRDLRDLLARSATRVDAKHQPVMVSYTSSTGKVRDVKGLEGWERNAAGMWFSPTYGFGLIDVNKALELAANHQPLPPLVQLPWQKINVTGSAAAIADVGNSPTSSTTRIATPLTVEAVQVMVSLDHQRLPDLLIELVSPAGTRSILLSPFNSLVGQSLDQQQLGFVRTKGLRDMRMLSNKFYGESAQGTWRLEVTDVANGTRQVSLLNRETRERTTLTERNNRQPGKLISWSLRVLGHDANRS.

Positions 1-24 (MKQTSLALAITALLSTLPSALVQA) are cleaved as a signal peptide. Cys-28 and Cys-48 are oxidised to a cystine. Asn-53 lines the Ca(2+) pocket. In terms of domain architecture, Peptidase S8 spans 59–421 (QWYLLNSGQD…GKVRDVKGLE (363 aa)). Asp-102 functions as the Charge relay system in the catalytic mechanism. Asp-111 serves as a coordination point for Ca(2+). The segment at 116 to 140 (VRPGSKNVVTGSDDPTPTDPDTAHG) is disordered. Residue His-139 is the Charge relay system of the active site. The Ca(2+) site is built by Val-150, Asn-152, Ile-154, Thr-156, Asp-321, Leu-322, Gly-324, Met-327, Asn-330, and Cys-350. Cys-325 and Cys-350 form a disulfide bridge. The active-site Charge relay system is Ser-360. The P/Homo B domain maps to 456–622 (LPPLVQLPWQ…SLRVLGHDAN (167 aa)). Ca(2+) contacts are provided by Asp-478, Asp-512, Asp-577, Ala-579, Asn-602, and Asn-603.

Belongs to the peptidase S8 family. Furin subfamily. As to quaternary structure, forms a complex with the chaperone ORF2 in the periplasm. After translocation of the ASP-ORF2 complex from the periplasm to the extracellular space, the complex is dissociated in a pH-dependent manner. Ca(2+) serves as cofactor.

Its subcellular location is the periplasm. It is found in the secreted. It catalyses the reaction Cleavage of -Lys-Lys-|-Xaa and -Lys-Arg-|-Xaa bonds.. With respect to regulation, folding, maturation and production of the active form of the protease by the cell requires a protein (ORF2), encoded just downstream of asp, which acts as a chaperone. Formation of a complex with ORF2 in the periplasm also inactivates the protease activity and likely protects ASP from intrinsic proteases. In vitro, protease activity is inhibited by human alpha-2-macroglobulin, suggesting that this inhibitor can impede ASP virulence activities in A.sobria infection sites. However, slow ASP inhibition by alpha-2-macroglobulin in plasma may indicate insufficient ASP control in vivo. Activity is inhibited by serine protease inhibitors such as 4-(2-aminoethyl)-benzenesulfonyl fluoride (AEBSF) and diisopropyl fluorophosphate (DFP). Not inhibited by metallo-protease inhibitors and cysteine protease inhibitors. The treatment with reagents to modify sulfhydryl group do not reduce the activity. Its function is as follows. Exhibits serine protease activity. Preferentially cleaves the peptide bond following two basic residues, one of which is Lys, but does not recognize the bond following a single basic residue. Probable potent virulence factor that cleaves various host plasma proteins, including prekallikrein, prothrombin and fibrinogen. ASP induces vascular leakage and reduction in blood pressure by activating the host plasma kallikrein/kinin system. It affects the host coagulation system during infection through activation of prothrombin to alpha-thrombin and degradation of fibrinogen, which impairs plasma clottability. It also hydrolyzes the complement component C5, releasing the C5a anaphylatoxin, which causes the formation of pus and edema. In addition, degrades its external chaperone ORF2 after the secretion of the ASP-ORF2 complex. This chain is Aeromonas extracellular serine protease, found in Aeromonas sobria.